We begin with the raw amino-acid sequence, 537 residues long: Tyrosine-protein kinase Fyn (537 aa).

A lipid anchor (N-myristoyl glycine) is attached at G2. S-palmitoyl cysteine attachment occurs at residues C3 and C6. Residues 14–35 are disordered; it reads LTEERDGSLNQSSGYRYGTDPT. Phosphoserine occurs at positions 21 and 26. The SH3 domain maps to 82 to 143; sequence TGVTLFVALY…PSNYVAPVDS (62 aa). Positions 149 to 246 constitute an SH2 domain; the sequence is WYFGKLGRKD…GLCCRLVVPC (98 aa). Position 185 is a phosphotyrosine (Y185). In terms of domain architecture, Protein kinase spans 271–524; the sequence is LQLIKRLGNG…YLQGFLEDYF (254 aa). ATP is bound by residues 277–285 and K299; that span reads LGNGQFGEV. The active-site Proton acceptor is D390. Position 420 is a phosphotyrosine; by autocatalysis (Y420). The residue at position 531 (Y531) is a Phosphotyrosine.

It belongs to the protein kinase superfamily. Tyr protein kinase family. SRC subfamily. Interacts (via its SH3 domain) with PIK3R1 and PRMT8. Interacts with FYB1, PAG1, and SH2D1A. Interacts with CD79A (tyrosine-phosphorylated form); the interaction increases FYN activity. Interacts (via SH2 domain) with CSF1R (tyrosine phosphorylated). Interacts with TOM1L1 (phosphorylated form). Interacts with KDR (tyrosine phosphorylated). Interacts (via SH3 domain) with KLHL2 (via N-terminus). Interacts with SH2D1A and SLAMF1. Interacts with ITCH; the interaction phosphorylates ITCH and negatively regulates its activity. Interacts with FASLG. Interacts with RUNX3. Interacts with KIT. Interacts with EPHA8; possible downstream effector of EPHA8 in regulation of cell adhesion. Interacts with PTK2/FAK1; this interaction leads to PTK2/FAK1 phosphorylation and activation. Interacts with CAV1; this interaction couples integrins to the Ras-ERK pathway. Interacts with UNC119. Interacts (via SH2 domain) with PTPRH (phosphorylated form). Interacts with PTPRO (phosphorylated form). Interacts with PTPRB (phosphorylated form). Interacts with FYB2. Interacts with DSCAM. Interacts with SKAP1 and FYB1; this interaction promotes the phosphorylation of CLNK. Interacts with NEDD9; in the presence of PTK2. Requires Mn(2+) as cofactor. Post-translationally, autophosphorylated at Tyr-420. Phosphorylation on the C-terminal tail at Tyr-531 by CSK maintains the enzyme in an inactive state. PTPRC/CD45 dephosphorylates Tyr-531 leading to activation. Dephosphorylation at Tyr-420 by PTPN2 negatively regulates T-cell receptor signaling. Phosphorylated at tyrosine residues, which can be enhanced by NTN1. Palmitoylated. Palmitoylation at Cys-3 and Cys-6, probably by ZDHHC21, regulates subcellular location. In terms of tissue distribution, detected in spinal cord oligodendrocytes (at protein level).

Its subcellular location is the cytoplasm. It is found in the nucleus. The protein localises to the cell membrane. It localises to the perikaryon. It carries out the reaction L-tyrosyl-[protein] + ATP = O-phospho-L-tyrosyl-[protein] + ADP + H(+). With respect to regulation, inhibited by phosphorylation of Tyr-531 by leukocyte common antigen and activated by dephosphorylation of this site. Its function is as follows. Non-receptor tyrosine-protein kinase that plays a role in many biological processes including regulation of cell growth and survival, cell adhesion, integrin-mediated signaling, cytoskeletal remodeling, cell motility, immune response and axon guidance. Inactive FYN is phosphorylated on its C-terminal tail within the catalytic domain. Following activation by PKA, the protein subsequently associates with PTK2/FAK1, allowing PTK2/FAK1 phosphorylation, activation and targeting to focal adhesions. Involved in the regulation of cell adhesion and motility through phosphorylation of CTNNB1 (beta-catenin) and CTNND1 (delta-catenin). Regulates cytoskeletal remodeling by phosphorylating several proteins including the actin regulator WAS and the microtubule-associated proteins MAP2 and MAPT. Promotes cell survival by phosphorylating AGAP2/PIKE-A and preventing its apoptotic cleavage. Participates in signal transduction pathways that regulate the integrity of the glomerular slit diaphragm (an essential part of the glomerular filter of the kidney) by phosphorylating several slit diaphragm components including NPHS1, KIRREL1 and TRPC6. Plays a role in neural processes by phosphorylating DPYSL2, a multifunctional adapter protein within the central nervous system, ARHGAP32, a regulator for Rho family GTPases implicated in various neural functions, and SNCA, a small pre-synaptic protein. Involved in reelin signaling by mediating phosphorylation of DAB1 following reelin (RELN)-binding to its receptor. Participates in the downstream signaling pathways that lead to T-cell differentiation and proliferation following T-cell receptor (TCR) stimulation. Phosphorylates PTK2B/PYK2 in response to T-cell receptor activation. Also participates in negative feedback regulation of TCR signaling through phosphorylation of PAG1, thereby promoting interaction between PAG1 and CSK and recruitment of CSK to lipid rafts. CSK maintains LCK and FYN in an inactive form. Promotes CD28-induced phosphorylation of VAV1. In mast cells, phosphorylates CLNK after activation of immunoglobulin epsilon receptor signaling. Can also promote CD244-mediated NK cell activation. The sequence is that of Tyrosine-protein kinase Fyn from Rattus norvegicus (Rat).